Reading from the N-terminus, the 527-residue chain is Berberine bridge enzyme-like 5 (527 aa).

The first 19 residues, 1–19 (MKALFSVLCLVLLVSILRA), serve as a signal peptide directing secretion. A disulfide bridge connects residues cysteine 32 and cysteine 95. Residues asparagine 35 and asparagine 52 are each glycosylated (N-linked (GlcNAc...) asparagine). In terms of domain architecture, FAD-binding PCMH-type spans 73–247 (NYQKLVAIVA…LSWKINLVEV (175 aa)). The 6-(S-cysteinyl)-8alpha-(pros-histidyl)-FAD (His-Cys) cross-link spans 110–172 (HDYEGLSYTS…QTLAFPAGVC (63 aa)). An N-linked (GlcNAc...) asparagine glycan is attached at asparagine 341.

This sequence belongs to the oxygen-dependent FAD-linked oxidoreductase family. Requires FAD as cofactor. Post-translationally, the FAD cofactor is bound via a bicovalent 6-S-cysteinyl, 8alpha-N1-histidyl FAD linkage.

The protein resides in the secreted. Its subcellular location is the cell wall. Its function is as follows. Probable flavin-dependent oxidoreductase. The chain is Berberine bridge enzyme-like 5 from Arabidopsis thaliana (Mouse-ear cress).